A 359-amino-acid chain; its full sequence is Innexin inx2 (359 aa).

Residues 1 to 22 (MFDVFGSVKGLLKLDSVCIDNN) lie on the Cytoplasmic side of the membrane. Residues 23–43 (LFRLHYKATVIILIAFSLLVT) traverse the membrane as a helical segment. Topologically, residues 44-109 (SRQYIGDPID…KDEVKYHKYY (66 aa)) are extracellular. Residues 110–130 (QWVCFVLFFQAILFYIPRYLW) traverse the membrane as a helical segment. The Cytoplasmic segment spans residues 131–180 (KTWEGGRIKMLVLDLNSPVVNEQSKADRKKLLVDYFATNLHTQNFYAYRF). Residues 181–201 (FICEALNFVNVVGQIYFMDLF) traverse the membrane as a helical segment. Topologically, residues 202–266 (LDGEFTTYGS…VLPLNIVNEK (65 aa)) are extracellular. The helical transmembrane segment at 267-287 (IYVFLWFWFVILSVLTGIGLV) threads the bilayer. Residues 288-359 (YRLATAMGPQ…AKKLEGKEIV (72 aa)) lie on the Cytoplasmic side of the membrane.

It belongs to the pannexin family. As to expression, widespread expression in embryo, in anterior and posterior row of neural precursors, midline precursors and in epithelial sheet of stomodeum.

It is found in the cell membrane. Its subcellular location is the cell junction. It localises to the gap junction. Its function is as follows. Structural components of the gap junctions. The polypeptide is Innexin inx2 (inx2) (Schistocerca americana (American grasshopper)).